The primary structure comprises 557 residues: Tripeptidyl-peptidase 1 (557 aa).

The N-terminal stretch at 1-16 (MRVAVFVLSFIWLVNG) is a signal peptide. A propeptide spans 17 to 190 (ELLEADQDAV…WEGARQAILG (174 aa)) (removed in mature form). A glycan (N-linked (GlcNAc...) asparagine) is linked at Asn53. Cys107 and Cys118 are disulfide-bonded. In terms of domain architecture, Peptidase S53 spans 194 to 557 (GVTPAVIRNR…YPVFLASLMD (364 aa)). N-linked (GlcNAc...) asparagine glycosylation is found at Asn205 and Asn216. Residues Glu266 and Asp270 each act as charge relay system in the active site. Asn280, Asn307, and Asn438 each carry an N-linked (GlcNAc...) asparagine glycan. Intrachain disulfides connect Cys359–Cys521 and Cys517–Cys532. Ser470 acts as the Charge relay system in catalysis. Ca(2+)-binding residues include Asp512 and Val513. Ca(2+) is bound at residue Asp538.

The cofactor is Ca(2+). In terms of processing, activated by autocatalytic proteolytical processing.

It is found in the lysosome. The catalysed reaction is Release of an N-terminal tripeptide from a polypeptide, but also has endopeptidase activity.. In terms of biological role, lysosomal serine protease with tripeptidyl-peptidase I activity. May act as a non-specific lysosomal peptidase which generates tripeptides from the breakdown products produced by lysosomal proteinases. Requires substrates with an unsubstituted N-terminus. The sequence is that of Tripeptidyl-peptidase 1 from Danio rerio (Zebrafish).